Here is a 389-residue protein sequence, read N- to C-terminus: Major outer membrane porin (389 aa).

The first 23 residues, 1–23, serve as a signal peptide directing secretion; sequence MKKLLKSALLSAAFAGSVGSLQA.

It belongs to the chlamydial porin (CP) (TC 1.B.2) family. As to quaternary structure, part of a disulfide cross-linked outer membrane complex (COMC) composed of the major outer membrane porin (MOMP), the small cysteine-rich protein (OmcA) and the large cysteine-rich periplasmic protein (OmcB).

It is found in the cell outer membrane. Its function is as follows. In elementary bodies (EBs, the infectious stage, which is able to survive outside the host cell) provides the structural integrity of the outer envelope through disulfide cross-links with the small cysteine-rich protein and the large cysteine-rich periplasmic protein. It has been described in publications as the Sarkosyl-insoluble COMC (Chlamydia outer membrane complex), and serves as the functional equivalent of peptidoglycan. Functionally, permits diffusion of specific solutes through the outer membrane. This is Major outer membrane porin (ompA) from Chlamydia pneumoniae (Chlamydophila pneumoniae).